The primary structure comprises 1119 residues: Putative transcription factor SEF1 (1119 aa).

2 disordered regions span residues 1-70 and 86-105; these read MGDP…TQSR and QNGEDSSNISNNSNAVSKGK. Positions 47–70 are enriched in polar residues; sequence LHTQQSYYGNGTDGASESALTQSR. Positions 118 to 148 form a DNA-binding region, zn(2)-C6 fungal-type; that stretch reads CTHCRQHKIKCNASEKFPAPCSRCERMGLHC. Disordered regions lie at residues 236-290, 306-335, 894-913, 926-962, and 994-1018; these read QLLQ…PANT, SQQISSSSPQNSSPTTTGHSPANDLSSSKQ, ASSSSTATRLNADNPTTDTN, KKSSKSSDTPTNKPKFNSTSSIPTATPTSEQRAAHNT, and SADSNGTSNNNIPNSTAPLNTPDTN. Over residues 243–260 the composition is skewed to low complexity; sequence TTTTNPTTSSNSKVVTPT. The segment covering 261–288 has biased composition (polar residues); that stretch reads GSDHSPASHNGGSLSSGKPQLLNDSVPA. Residues 306–322 show a composition bias toward low complexity; sequence SQQISSSSPQNSSPTTT. Composition is skewed to polar residues over residues 323–335, 902–913, and 931–942; these read GHSPANDLSSSKQ, RLNADNPTTDTN, and SSDTPTNKPKFN. A compositionally biased stretch (low complexity) spans 943-954; the sequence is STSSIPTATPTS.

The protein resides in the nucleus. Functionally, putative transcription factor. Suppresses the lethal phenotype of RPM2 deletion. This Kluyveromyces lactis (strain ATCC 8585 / CBS 2359 / DSM 70799 / NBRC 1267 / NRRL Y-1140 / WM37) (Yeast) protein is Putative transcription factor SEF1 (SEF1).